Reading from the N-terminus, the 134-residue chain is Transcription antitermination protein NusB (134 aa).

This sequence belongs to the NusB family.

Its function is as follows. Involved in transcription antitermination. Required for transcription of ribosomal RNA (rRNA) genes. Binds specifically to the boxA antiterminator sequence of the ribosomal RNA (rrn) operons. The sequence is that of Transcription antitermination protein NusB from Shewanella oneidensis (strain ATCC 700550 / JCM 31522 / CIP 106686 / LMG 19005 / NCIMB 14063 / MR-1).